The chain runs to 192 residues: Shikimate kinase (192 aa).

15–20 contributes to the ATP binding site; the sequence is GAGKTT. Thr19 lines the Mg(2+) pocket. Positions 37, 61, and 83 each coordinate substrate. Residue Arg121 coordinates ATP. Arg140 is a substrate binding site.

This sequence belongs to the shikimate kinase family. In terms of assembly, monomer. It depends on Mg(2+) as a cofactor.

Its subcellular location is the cytoplasm. It carries out the reaction shikimate + ATP = 3-phosphoshikimate + ADP + H(+). It functions in the pathway metabolic intermediate biosynthesis; chorismate biosynthesis; chorismate from D-erythrose 4-phosphate and phosphoenolpyruvate: step 5/7. Catalyzes the specific phosphorylation of the 3-hydroxyl group of shikimic acid using ATP as a cosubstrate. The chain is Shikimate kinase from Cupriavidus pinatubonensis (strain JMP 134 / LMG 1197) (Cupriavidus necator (strain JMP 134)).